The following is a 284-amino-acid chain: GPN-loop GTPase 3 (284 aa).

13–18 (GSGKST) is a binding site for GTP. The Gly-Pro-Asn (GPN)-loop; involved in dimer interface motif lies at 72-74 (GPN). Position 174-177 (174-177 (TKMD)) interacts with GTP.

It belongs to the GPN-loop GTPase family. In terms of assembly, heterodimer with GPN1. Binds to RNA polymerase II (RNAPII). Interacts directly with subunits RPB4 and RPB7 and the CTD of RPB1.

Small GTPase required for proper localization of RNA polymerase II (RNAPII). May act at an RNAP assembly step prior to nuclear import. The protein is GPN-loop GTPase 3 of Homo sapiens (Human).